The chain runs to 254 residues: Alcohol dehydrogenase 1 (254 aa).

10–33 lines the NAD(+) pocket; sequence FVAGLGGIGFDTSREIVKSGPKNL. Substrate is bound at residue serine 138. Tyrosine 151 serves as the catalytic Proton acceptor.

Belongs to the short-chain dehydrogenases/reductases (SDR) family. Homodimer.

The enzyme catalyses a primary alcohol + NAD(+) = an aldehyde + NADH + H(+). It catalyses the reaction a secondary alcohol + NAD(+) = a ketone + NADH + H(+). This is Alcohol dehydrogenase 1 (Adh1) from Drosophila navojoa (Fruit fly).